A 281-amino-acid chain; its full sequence is Protein DOG1-like 1 (281 aa).

The DOG1 domain maps to 9-265; it reads EKLQQDCYNE…HEWGKSREHR (257 aa). Residues 262–281 form a disordered region; the sequence is REHRRLEASGGDSGGNVTRE.

In Arabidopsis thaliana (Mouse-ear cress), this protein is Protein DOG1-like 1.